The following is a 361-amino-acid chain: Phosphoserine aminotransferase (361 aa).

L-glutamate is bound at residue R42. Pyridoxal 5'-phosphate is bound by residues 76–77 (AR), W102, T153, D173, and Q196. K197 is subject to N6-(pyridoxal phosphate)lysine. Position 238–239 (238–239 (NT)) interacts with pyridoxal 5'-phosphate.

This sequence belongs to the class-V pyridoxal-phosphate-dependent aminotransferase family. SerC subfamily. As to quaternary structure, homodimer. Pyridoxal 5'-phosphate is required as a cofactor.

It is found in the cytoplasm. It carries out the reaction O-phospho-L-serine + 2-oxoglutarate = 3-phosphooxypyruvate + L-glutamate. The enzyme catalyses 4-(phosphooxy)-L-threonine + 2-oxoglutarate = (R)-3-hydroxy-2-oxo-4-phosphooxybutanoate + L-glutamate. It participates in amino-acid biosynthesis; L-serine biosynthesis; L-serine from 3-phospho-D-glycerate: step 2/3. Its pathway is cofactor biosynthesis; pyridoxine 5'-phosphate biosynthesis; pyridoxine 5'-phosphate from D-erythrose 4-phosphate: step 3/5. In terms of biological role, catalyzes the reversible conversion of 3-phosphohydroxypyruvate to phosphoserine and of 3-hydroxy-2-oxo-4-phosphonooxybutanoate to phosphohydroxythreonine. This chain is Phosphoserine aminotransferase, found in Buchnera aphidicola subsp. Acyrthosiphon pisum (strain Tuc7).